A 217-amino-acid chain; its full sequence is Protein-L-isoaspartate O-methyltransferase (217 aa).

Serine 65 is a catalytic residue.

This sequence belongs to the methyltransferase superfamily. L-isoaspartyl/D-aspartyl protein methyltransferase family.

It is found in the cytoplasm. It catalyses the reaction [protein]-L-isoaspartate + S-adenosyl-L-methionine = [protein]-L-isoaspartate alpha-methyl ester + S-adenosyl-L-homocysteine. Its function is as follows. Catalyzes the methyl esterification of L-isoaspartyl residues in peptides and proteins that result from spontaneous decomposition of normal L-aspartyl and L-asparaginyl residues. It plays a role in the repair and/or degradation of damaged proteins. The sequence is that of Protein-L-isoaspartate O-methyltransferase from Chlorobium limicola (strain DSM 245 / NBRC 103803 / 6330).